The primary structure comprises 710 residues: Choline transporter-like protein 4 (710 aa).

Residues Met1–Asp34 lie on the Cytoplasmic side of the membrane. Residues Val35 to Ala55 form a helical membrane-spanning segment. The Extracellular segment spans residues Trp56–Trp229. 3 N-linked (GlcNAc...) asparagine glycosylation sites follow: Asn69, Asn155, and Asn197. The helical transmembrane segment at Tyr230–Leu250 threads the bilayer. The Cytoplasmic portion of the chain corresponds to Arg251 to Leu252. A helical transmembrane segment spans residues Val253–Ile273. At Tyr274 to Trp309 the chain is on the extracellular side. Asn298 is a glycosylation site (N-linked (GlcNAc...) asparagine). The chain crosses the membrane as a helical span at residues Leu310–Leu330. Residues Arg331–Pro358 are Cytoplasmic-facing. A helical transmembrane segment spans residues Leu359–Leu379. Over Ala380–Asn455 the chain is Extracellular. N-linked (GlcNAc...) asparagine glycans are attached at residues Asn393, Asn405, and Asn416. Residues Trp456 to Phe476 form a helical membrane-spanning segment. Residues His477–Ser501 lie on the Cytoplasmic side of the membrane. A helical transmembrane segment spans residues Leu502–Ile522. Topologically, residues Asp523–Tyr560 are extracellular. Residues Ile561–Leu581 form a helical membrane-spanning segment. Residues Met582–Leu597 are Cytoplasmic-facing. Residues Leu598–Phe618 form a helical membrane-spanning segment. Residues Ser619–Trp638 are Extracellular-facing. The helical transmembrane segment at Leu639–Phe659 threads the bilayer. Over Gly660 to Lys710 the chain is Cytoplasmic.

This sequence belongs to the CTL (choline transporter-like) family. In terms of processing, N-glycosylated; N-glycosylation of Asn-69, Asn-155 and Asn-393 is required for a proper thiamine pyrophosphate uptake. In terms of tissue distribution, highly expressed in colon, also detected in prostate, trachea and lung. Isoform 3 is also expressed in colon but a lower levels. Expressed in colon at low levels.

The protein resides in the membrane. Its subcellular location is the apical cell membrane. The catalysed reaction is choline(out) + n H(+)(in) = choline(in) + n H(+)(out). It catalyses the reaction thiamine diphosphate(out) = thiamine diphosphate(in). Choline transporter that plays a role in the choline-acetylcholine system and is required to the efferent innervation of hair cells in the olivocochlear bundle for the maintenance of physiological function of outer hair cells and the protection of hair cells from acoustic injury. Also described as a thiamine pyrophosphate transporter in colon, may mediate the absorption of microbiota-generated thiamine pyrophosphate and contribute to host thiamine (vitamin B1) homeostasis. Functionally, also has thiamine pyrophosphate transporter activity. This is Choline transporter-like protein 4 from Homo sapiens (Human).